Reading from the N-terminus, the 434-residue chain is Asparagine--tRNA ligase (434 aa).

This sequence belongs to the class-II aminoacyl-tRNA synthetase family. Homodimer.

It is found in the cytoplasm. The catalysed reaction is tRNA(Asn) + L-asparagine + ATP = L-asparaginyl-tRNA(Asn) + AMP + diphosphate + H(+). The polypeptide is Asparagine--tRNA ligase (Oenococcus oeni (strain ATCC BAA-331 / PSU-1)).